We begin with the raw amino-acid sequence, 92 residues long: Endoribonuclease HigB (92 aa).

H92 is a catalytic residue.

Forms a complex with the antitoxin HigA which inhibits the mRNA interferase activity. The heterodimer dimerizes to form a HigB-(HigA)2-HigB tetramer that is able to bind to the DNA.

Functionally, toxic component of a type II toxin-antitoxin (TA) system. A ribosome-associated translation-dependent mRNA interferase. Inhibits translation by sequence-specific cleavage of mRNA. Prefers either in-frame or out-of-frame 5'-AAA-3' codons (lysine). Also cleaves the first three AAAs of stretches of four or more A sequences. 20% of codons containing AA are cleaved and occassionally cuts even at a single A. The polypeptide is Endoribonuclease HigB (Proteus vulgaris).